Here is a 106-residue protein sequence, read N- to C-terminus: Tripartite terminase subunit 2 (106 aa).

It belongs to the herpesviridae TRM2 protein family. As to quaternary structure, associates with TRM1 and TRM3 to form the tripartite terminase complex.

It localises to the host nucleus. Its function is as follows. Component of the molecular motor that translocates viral genomic DNA in empty capsid during DNA packaging. Forms a tripartite terminase complex together with TRM1 and TRM3 in the host cytoplasm. Once the complex reaches the host nucleus, it interacts with the capsid portal vertex. This portal forms a ring in which genomic DNA is translocated into the capsid. The chain is Tripartite terminase subunit 2 from Homo sapiens (Human).